Consider the following 64-residue polypeptide: Large ribosomal subunit protein bL28 (64 aa).

Positions 1 to 27 (MAKRDQLTGKGPLSGNTRSHAMNHSKR) are disordered.

This sequence belongs to the bacterial ribosomal protein bL28 family.

The sequence is that of Large ribosomal subunit protein bL28 from Ureaplasma parvum serovar 3 (strain ATCC 27815 / 27 / NCTC 11736).